The sequence spans 168 residues: Small ribosomal subunit protein uS5 (168 aa).

An S5 DRBM domain is found at 17–80 (IEDQLVAVNR…EDGKKKMINV (64 aa)).

Belongs to the universal ribosomal protein uS5 family. Part of the 30S ribosomal subunit. Contacts proteins S4 and S8.

Functionally, with S4 and S12 plays an important role in translational accuracy. Located at the back of the 30S subunit body where it stabilizes the conformation of the head with respect to the body. This is Small ribosomal subunit protein uS5 from Lactobacillus helveticus (strain DPC 4571).